The primary structure comprises 518 residues: Light-independent protochlorophyllide reductase subunit B (518 aa).

Aspartate 36 lines the [4Fe-4S] cluster pocket. Aspartate 299 serves as the catalytic Proton donor. 434 to 435 is a substrate binding site; the sequence is GM.

Belongs to the ChlB/BchB/BchZ family. As to quaternary structure, protochlorophyllide reductase is composed of three subunits; ChlL, ChlN and ChlB. Forms a heterotetramer of two ChlB and two ChlN subunits. Requires [4Fe-4S] cluster as cofactor.

The protein resides in the plastid. It localises to the chloroplast. The enzyme catalyses chlorophyllide a + oxidized 2[4Fe-4S]-[ferredoxin] + 2 ADP + 2 phosphate = protochlorophyllide a + reduced 2[4Fe-4S]-[ferredoxin] + 2 ATP + 2 H2O. The protein operates within porphyrin-containing compound metabolism; chlorophyll biosynthesis (light-independent). Component of the dark-operative protochlorophyllide reductase (DPOR) that uses Mg-ATP and reduced ferredoxin to reduce ring D of protochlorophyllide (Pchlide) to form chlorophyllide a (Chlide). This reaction is light-independent. The NB-protein (ChlN-ChlB) is the catalytic component of the complex. The chain is Light-independent protochlorophyllide reductase subunit B from Adiantum capillus-veneris (Maidenhair fern).